The sequence spans 605 residues: Leucine-rich repeat-containing protein 40 (605 aa).

Positions 1 to 26 (MSRFRRGGKAPDPLSGFRAPKEQEPA) are disordered. LRR repeat units lie at residues 83–104 (DLTK…ISLL), 106–127 (ALVV…IKEL), 129–151 (NLQK…QHLQ), 152–173 (NLKS…IGHL), 175–196 (ILEE…VGQL), 198–219 (GLVK…IGKM), 221–242 (NLKQ…VAGM), 244–265 (SLEQ…PFLT), 266–287 (KLKE…HLQN), 290–311 (SLSV…ISLL), 313–335 (GLER…GSLP), 336–357 (NLKS…ILNK), 429–450 (FITT…IVEM), 453–475 (SVCD…CMLL), 476–497 (KLTH…MEAM), 499–520 (RLQS…LYRI), 522–543 (TLET…QLIK), 546–567 (KLST…LGNC), and 569–590 (SLRA…ILAK).

The polypeptide is Leucine-rich repeat-containing protein 40 (lrrc40) (Xenopus tropicalis (Western clawed frog)).